The chain runs to 241 residues: Octanoyltransferase (241 aa).

In terms of domain architecture, BPL/LPL catalytic spans 38 to 227; that stretch reads AGGPDTLLLL…AVCNALDGAL (190 aa). Substrate is bound by residues 85-92, 157-159, and 170-172; these read RGGKITWH, AIG, and GFA. The active-site Acyl-thioester intermediate is Cys-188.

This sequence belongs to the LipB family.

It localises to the cytoplasm. The enzyme catalyses octanoyl-[ACP] + L-lysyl-[protein] = N(6)-octanoyl-L-lysyl-[protein] + holo-[ACP] + H(+). The protein operates within protein modification; protein lipoylation via endogenous pathway; protein N(6)-(lipoyl)lysine from octanoyl-[acyl-carrier-protein]: step 1/2. Its function is as follows. Catalyzes the transfer of endogenously produced octanoic acid from octanoyl-acyl-carrier-protein onto the lipoyl domains of lipoate-dependent enzymes. Lipoyl-ACP can also act as a substrate although octanoyl-ACP is likely to be the physiological substrate. The polypeptide is Octanoyltransferase (Mycobacterium ulcerans (strain Agy99)).